Here is a 284-residue protein sequence, read N- to C-terminus: 4-diphosphocytidyl-2-C-methyl-D-erythritol kinase (284 aa).

Residue K14 is part of the active site. Residue 98–108 (PMGGGLGGGSS) coordinates ATP. Residue D140 is part of the active site.

It belongs to the GHMP kinase family. IspE subfamily.

It carries out the reaction 4-CDP-2-C-methyl-D-erythritol + ATP = 4-CDP-2-C-methyl-D-erythritol 2-phosphate + ADP + H(+). Its pathway is isoprenoid biosynthesis; isopentenyl diphosphate biosynthesis via DXP pathway; isopentenyl diphosphate from 1-deoxy-D-xylulose 5-phosphate: step 3/6. Functionally, catalyzes the phosphorylation of the position 2 hydroxy group of 4-diphosphocytidyl-2C-methyl-D-erythritol. The polypeptide is 4-diphosphocytidyl-2-C-methyl-D-erythritol kinase (Shewanella sp. (strain MR-7)).